Reading from the N-terminus, the 524-residue chain is GMP synthase [glutamine-hydrolyzing] (524 aa).

The Glutamine amidotransferase type-1 domain maps to 5 to 195 (KVIVIDFGGQ…VRGVCGCAGT (191 aa)). Cysteine 82 serves as the catalytic Nucleophile. Active-site residues include histidine 169 and glutamate 171. One can recognise a GMPS ATP-PPase domain in the interval 196–389 (WKMDSFVKNT…LGLPDYLVFR (194 aa)). 223–229 (SGGVDSS) provides a ligand contact to ATP.

In terms of assembly, homodimer.

The enzyme catalyses XMP + L-glutamine + ATP + H2O = GMP + L-glutamate + AMP + diphosphate + 2 H(+). It functions in the pathway purine metabolism; GMP biosynthesis; GMP from XMP (L-Gln route): step 1/1. Functionally, catalyzes the synthesis of GMP from XMP. This is GMP synthase [glutamine-hydrolyzing] from Agathobacter rectalis (strain ATCC 33656 / DSM 3377 / JCM 17463 / KCTC 5835 / VPI 0990) (Eubacterium rectale).